The sequence spans 423 residues: D-tagatose-1,6-bisphosphate aldolase subunit GatZ (423 aa).

This sequence belongs to the GatZ/KbaZ family. GatZ subfamily. As to quaternary structure, forms a complex with GatY.

Its pathway is carbohydrate metabolism; D-tagatose 6-phosphate degradation; D-glyceraldehyde 3-phosphate and glycerone phosphate from D-tagatose 6-phosphate: step 2/2. Its function is as follows. Component of the tagatose-1,6-bisphosphate aldolase GatYZ that is required for full activity and stability of the Y subunit. Could have a chaperone-like function for the proper and stable folding of GatY. When expressed alone, GatZ does not show any aldolase activity. Is involved in the catabolism of galactitol. This chain is D-tagatose-1,6-bisphosphate aldolase subunit GatZ, found in Salmonella enteritidis PT4 (strain P125109).